Consider the following 421-residue polypeptide: Protein MID1-COMPLEMENTING ACTIVITY 1 (421 aa).

Residues 188 to 218 (RFCEALKTENEKLQIELQRSQEHYDVAQCEV) are a coiled coil. Positions 233–288 (EPDSEKELTKKASKKSERSSSMKTEYSYDEDSPKKSSTRAASRSTSNVSSGHDLLS) are disordered. Over residues 235 to 252 (DSEKELTKKASKKSERSS) the composition is skewed to basic and acidic residues. Positions 270–282 (TRAASRSTSNVSS) are enriched in low complexity. A helical transmembrane segment spans residues 346-362 (LMAYSLILSCCCYTCCV).

In terms of tissue distribution, expressed in roots, leaves, stems, flowers and siliques. Expressed in vascular tissues of cotyledons, leaves and primary root, in the promeristem and adjacent elongation zone of the primary root and in the shoot apical meristem. Detected in the stele and endodermis, but not in the cortex, epidermis or root cap, including the columella. Not expressed in root hairs or in mesophyll cells of leaves and cotyledons.

Its subcellular location is the cell membrane. With respect to regulation, inhibited by GdCl(3), but not by verapamil. In terms of biological role, calcium-permeable stretch-activated channel component. Involved in mechano-stimulated calcium uptake mechanism and in mechanosensing in the primary root. The chain is Protein MID1-COMPLEMENTING ACTIVITY 1 (MCA1) from Arabidopsis thaliana (Mouse-ear cress).